The primary structure comprises 208 residues: Large ribosomal subunit protein bL9 (208 aa).

The segment at 168–208 (GKVEKGSCTEGESLELGSVDNDINSGNVDSNESEKQDSVSE) is disordered. Residues 188-197 (NDINSGNVDS) show a composition bias toward polar residues. Residues 199-208 (ESEKQDSVSE) are compositionally biased toward basic and acidic residues.

It belongs to the bacterial ribosomal protein bL9 family.

Functionally, binds to the 23S rRNA. The polypeptide is Large ribosomal subunit protein bL9 (Ehrlichia chaffeensis (strain ATCC CRL-10679 / Arkansas)).